The following is a 223-amino-acid chain: ATP synthase subunit a 1 (223 aa).

The next 5 membrane-spanning stretches (helical) occupy residues 20-40 (LTIA…AFAS), 78-98 (YLPY…CTII), 108-128 (LSTT…FGIA), 174-194 (MILA…MSVL), and 196-216 (LLTG…YISA).

Belongs to the ATPase A chain family. In terms of assembly, F-type ATPases have 2 components, CF(1) - the catalytic core - and CF(0) - the membrane proton channel. CF(1) has five subunits: alpha(3), beta(3), gamma(1), delta(1), epsilon(1). CF(0) has four main subunits: a, b, b' and c.

It is found in the cell inner membrane. In terms of biological role, key component of the proton channel; it plays a direct role in the translocation of protons across the membrane. This chain is ATP synthase subunit a 1, found in Chlorobium luteolum (strain DSM 273 / BCRC 81028 / 2530) (Pelodictyon luteolum).